The chain runs to 383 residues: 8-amino-7-oxononanoate synthase (383 aa).

Position 23 (R23) interacts with substrate. Position 110–111 (G110–F111) interacts with pyridoxal 5'-phosphate. Substrate is bound at residue H135. The pyridoxal 5'-phosphate site is built by S181, H209, and T235. K238 carries the N6-(pyridoxal phosphate)lysine modification. T351 contributes to the substrate binding site.

The protein belongs to the class-II pyridoxal-phosphate-dependent aminotransferase family. BioF subfamily. As to quaternary structure, homodimer. The cofactor is pyridoxal 5'-phosphate.

The enzyme catalyses 6-carboxyhexanoyl-[ACP] + L-alanine + H(+) = (8S)-8-amino-7-oxononanoate + holo-[ACP] + CO2. It functions in the pathway cofactor biosynthesis; biotin biosynthesis. Its function is as follows. Catalyzes the decarboxylative condensation of pimeloyl-[acyl-carrier protein] and L-alanine to produce 8-amino-7-oxononanoate (AON), [acyl-carrier protein], and carbon dioxide. The protein is 8-amino-7-oxononanoate synthase of Aliivibrio salmonicida (strain LFI1238) (Vibrio salmonicida (strain LFI1238)).